The sequence spans 546 residues: Autophagy-related protein 22 (546 aa).

3 helical membrane passes run 64–84 (IAVA…DIAY), 102–122 (ILFL…AAIL), and 124–144 (IVGN…LPGL). The disordered stretch occupies residues 160-185 (SEGLQDGLRDVHEDTDEENTGSVSRE). 8 helical membrane passes run 244–264 (AIGF…VTAL), 273–293 (LAIG…CIGL), 333–353 (IFLL…YAAI), 365–385 (PKII…SVLV), 405–425 (VLLA…AGLV), 435–455 (GEMY…LSYS), 473–493 (SLFA…VGLI), and 503–523 (GFLF…RVAV).

The protein belongs to the ATG22 family.

Its subcellular location is the vacuole membrane. Functionally, vacuolar effluxer which mediate the efflux of amino acids resulting from autophagic degradation. The release of autophagic amino acids allows the maintenance of protein synthesis and viability during nitrogen starvation. This Cryptococcus neoformans var. neoformans serotype D (strain B-3501A) (Filobasidiella neoformans) protein is Autophagy-related protein 22 (ATG22).